Here is a 994-residue protein sequence, read N- to C-terminus: Chloride channel protein 1 (994 aa).

Over 1–118 the chain is Cytoplasmic; sequence MERSQSQRHG…VLRRKLGEDW (118 aa). The helical transmembrane segment at 119 to 150 threads the bilayer; sequence IFLVLLGLLMALVSWCMDYVSAKSLQAYKWTY. Over 151-158 the chain is Extracellular; the sequence is AQMKPSLP. The chain crosses the membrane as a helical span at residues 159–179; that stretch reads LQYLAWVTFPLILILFSALFC. Topologically, residues 180 to 183 are cytoplasmic; it reads QLIS. The segment at residues 184–189 is an intramembrane region (note=Loop between two helices); sequence PQAVGS. The Selectivity filter part_1 signature appears at 188–192; it reads GSGIP. S189 is a chloride binding site. Positions 190 to 195 form an intramembrane region, helical; sequence GIPEMK. At 196–208 the chain is on the cytoplasmic side; the sequence is TILRGVVLKEYLT. Positions 209–224 form an intramembrane region, helical; it reads LKAFVAKVVALTAGLG. The note=Loop between two helices intramembrane region spans 225–230; that stretch reads SGIPVG. The Selectivity filter part_2 signature appears at 230–234; it reads GKEGP. Positions 231–246 form an intramembrane region, helical; sequence KEGPFVHIASICAAVL. The Cytoplasmic portion of the chain corresponds to 247-268; the sequence is SKFMSMFSGVYEQPYYYTDILT. 2 intramembrane regions (helical) span residues 269 to 280 and 281 to 290; these read VGCAVGVGCCFG and TPLGGVLFSI. The Cytoplasmic segment spans residues 291-301; that stretch reads EVTSTYFAVRN. A helical transmembrane segment spans residues 302–321; it reads YWRGFFAATFSAFVFRVLAV. At 322 to 347 the chain is on the extracellular side; sequence WNKDAVTITALFRTNFRMDFPFDLKE. The chain crosses the membrane as a helical span at residues 348–376; that stretch reads LPAFAVIGICCGFLGAVFVYLHRQVMLGV. Residues 377 to 390 lie on the Cytoplasmic side of the membrane; that stretch reads RKHKCLSQFLAKHR. A helical membrane pass occupies residues 391–408; that stretch reads LLYPGIVTFVIASLTFPP. Residues 409–414 lie on the Extracellular side of the membrane; it reads GMGQFM. Residues 415–418 constitute an intramembrane region (note=Loop between two helices); sequence AGEL. An intramembrane region (helical) is located at residues 419–426; the sequence is MPREAIST. The Extracellular segment spans residues 427-457; the sequence is LFDNNTWVKHIGDPQSLGQSAVWLHPQVNVI. The helical intramembrane region spans 458–475; the sequence is IIILLFFVMKFWMSIVAT. The segment at residues 476–482 is an intramembrane region (note=Loop between two helices); that stretch reads TMPIPCG. Residues 482 to 486 carry the Selectivity filter part_3 motif; it reads GGFMP. An intramembrane region (helical) is located at residues 483-498; that stretch reads GFMPVFVLGAAFGRLV. F484 is a binding site for chloride. Topologically, residues 499–521 are extracellular; sequence GEIMAMLFPEGILFDDIIYKILP. Residues 522-538 constitute an intramembrane region (helical); the sequence is GGYAVIGAAALTGAVSH. Residues 539-540 constitute an intramembrane region (note=Loop between two helices); sequence TV. The helical intramembrane region spans 541–554; it reads STAVICFELTGQIA. The Extracellular segment spans residues 555 to 557; sequence HIL. The segment at residues 558-571 is an intramembrane region (helical); the sequence is PMMVAVILANMVAQ. The segment at residues 572–575 is an intramembrane region (note=Loop between two helices); it reads SLQP. Residues 576–578 constitute an intramembrane region (helical); the sequence is SLY. Residue Y578 participates in chloride binding. Over 579–994 the chain is Cytoplasmic; the sequence is DSIIQVKKLP…DEEDEDELIL (416 aa). The 60-residue stretch at 609-668 folds into the CBS 1 domain; it reads MVRDVKFVSASCTYGELRNLLQATTVKTLPLVDSKDSMILLGSVERSELQSLLQRHLCAE. Positions 710–770 are disordered; the sequence is EDEDEDLSRK…PEASDSADQR (61 aa). The span at 725–739 shows a compositional bias: pro residues; sequence TPAPPPPSPPPPPSQ. One can recognise a CBS 2 domain in the interval 827 to 882; the sequence is IDQSPFQLVEQTTLHKTHTLFSLLGLHLAYVTSMGKLRGVLALEELQKAIEGHTKS. Disordered stretches follow at residues 886 to 954 and 971 to 994; these read LRPP…ARAE and ELAD…ELIL. S892 carries the phosphoserine modification. Residues 933 to 943 are compositionally biased toward pro residues; sequence PETPVPPPSPE. A compositionally biased stretch (acidic residues) spans 985-994; that stretch reads DEEDEDELIL.

It belongs to the chloride channel (TC 2.A.49) family. ClC-1/CLCN1 subfamily. In terms of assembly, homodimer. As to expression, predominantly expressed in skeletal muscles.

The protein resides in the cell membrane. It is found in the sarcolemma. The protein localises to the T-tubule. The enzyme catalyses chloride(in) = chloride(out). It catalyses the reaction thiocyanate(in) = thiocyanate(out). The catalysed reaction is bromide(in) = bromide(out). It carries out the reaction nitrate(in) = nitrate(out). The enzyme catalyses iodide(out) = iodide(in). Its activity is regulated as follows. Modulated by membrane voltage with depolarization favouring channel opening and hyperpolarization favouring channel closure. Inhibited by acidic pH and ATP binding due to a shift of voltage dependence of common gating to more positive voltages. Inhibited by 9-anthracene-carboxylic. Voltage-gated chloride channel involved in skeletal muscle excitability. Generates most of the plasma membrane chloride conductance in skeletal muscle fibers, stabilizes the resting membrane potential and contributes to the repolarization phase during action potential firing. Forms a homodimeric channel where each subunit has its own ion conduction pathway. Conducts double-barreled currents controlled by two types of gates, two fast glutamate gates that control each subunit independently and a slow common gate that opens and shuts off both subunits simultaneously. Has a significant open probability at muscle resting potential and is further activated upon membrane depolarization. Permeable to small monovalent anions with ion selectivity for chloride &gt; thiocyanate &gt; bromide &gt; nitrate &gt; iodide. This is Chloride channel protein 1 (Clcn1) from Mus musculus (Mouse).